Reading from the N-terminus, the 356-residue chain is tRNA pseudouridine synthase D (356 aa).

D84 serves as the catalytic Nucleophile. In terms of domain architecture, TRUD spans 159–302 (GVPNYYGPQR…RRGARRPIRV (144 aa)).

This sequence belongs to the pseudouridine synthase TruD family.

The enzyme catalyses uridine(13) in tRNA = pseudouridine(13) in tRNA. Functionally, responsible for synthesis of pseudouridine from uracil-13 in transfer RNAs. The protein is tRNA pseudouridine synthase D of Thermus thermophilus (strain ATCC 27634 / DSM 579 / HB8).